The primary structure comprises 279 residues: Acetylglutamate kinase (279 aa).

Substrate is bound by residues Gly64–Gly65, Arg86, and Asn177.

This sequence belongs to the acetylglutamate kinase family. ArgB subfamily.

It is found in the cytoplasm. It carries out the reaction N-acetyl-L-glutamate + ATP = N-acetyl-L-glutamyl 5-phosphate + ADP. Its pathway is amino-acid biosynthesis; L-arginine biosynthesis; N(2)-acetyl-L-ornithine from L-glutamate: step 2/4. In terms of biological role, catalyzes the ATP-dependent phosphorylation of N-acetyl-L-glutamate. The polypeptide is Acetylglutamate kinase (Campylobacter jejuni subsp. jejuni serotype O:6 (strain 81116 / NCTC 11828)).